We begin with the raw amino-acid sequence, 317 residues long: MPVQGSQRRLLGSLNSTPTATPHLGLAANQTGARCREVSIPDGLFLSLGLVSLVENVLVVTAIAKNRNLHSPMYCFICCLALSDLLVSGSNMLETAVTLLLEAGALVARAAVVQQLDNVIDVITCSSMLSSLCFLGAIAVDRYISIFYALRYHSIVTLPRAQRAIAAIWVASVLCSTLFIAYYDHAAVLLCLVVFFLAMLVLMAVLYVHMLARACQHAQGIARLHKRQRLAHQGFGLKGAATLTILLGIFFLCWGPFFLHLTLIVLCPQHPTCSCIFKNFNLFLALIICNAIIDPLIYAFRSQELRRTLKEVLLCSW.

The Extracellular segment spans residues 1 to 37 (MPVQGSQRRLLGSLNSTPTATPHLGLAANQTGARCRE). Asn-29 carries N-linked (GlcNAc...) asparagine glycosylation. A helical membrane pass occupies residues 38-63 (VSIPDGLFLSLGLVSLVENVLVVTAI). At 64 to 72 (AKNRNLHSP) the chain is on the cytoplasmic side. A helical membrane pass occupies residues 73–93 (MYCFICCLALSDLLVSGSNML). At 94 to 118 (ETAVTLLLEAGALVARAAVVQQLDN) the chain is on the extracellular side. A helical membrane pass occupies residues 119–140 (VIDVITCSSMLSSLCFLGAIAV). Topologically, residues 141–163 (DRYISIFYALRYHSIVTLPRAQR) are cytoplasmic. A helical membrane pass occupies residues 164 to 183 (AIAAIWVASVLCSTLFIAYY). The Extracellular segment spans residues 184 to 191 (DHAAVLLC). Residues 192-211 (LVVFFLAMLVLMAVLYVHML) form a helical membrane-spanning segment. Over 212 to 240 (ARACQHAQGIARLHKRQRLAHQGFGLKGA) the chain is Cytoplasmic. The chain crosses the membrane as a helical span at residues 241 to 266 (ATLTILLGIFFLCWGPFFLHLTLIVL). Over 267–279 (CPQHPTCSCIFKN) the chain is Extracellular. The helical transmembrane segment at 280–300 (FNLFLALIICNAIIDPLIYAF) threads the bilayer. Residues 301 to 317 (RSQELRRTLKEVLLCSW) lie on the Cytoplasmic side of the membrane. The S-palmitoyl cysteine moiety is linked to residue Cys-315.

This sequence belongs to the G-protein coupled receptor 1 family. In terms of assembly, interacts with MGRN1, but does not undergo MGRN1-mediated ubiquitination; this interaction competes with GNAS-binding and thus inhibits agonist-induced cAMP production. Interacts with OPN3; the interaction results in a decrease in MC1R-mediated cAMP signaling and ultimately a decrease in melanin production in melanocytes. As to expression, expressed in the adrenal gland.

Its subcellular location is the cell membrane. Functionally, receptor for MSH (alpha, beta and gamma) and ACTH. The activity of this receptor is mediated by G proteins which activate adenylate cyclase. Mediates melanogenesis, the production of eumelanin (black/brown) and phaeomelanin (red/yellow), via regulation of cAMP signaling in melanocytes. This chain is Melanocyte-stimulating hormone receptor (MC1R), found in Macaca mulatta (Rhesus macaque).